A 259-amino-acid chain; its full sequence is DnaJ homolog subfamily C member 9 (259 aa).

One can recognise a J domain in the interval 15–82 (DLYQVLGVRR…EQKAVYDEQG (68 aa)). S109 is modified (phosphoserine). A required for histone binding region spans residues 171–248 (EIPAYSAFVK…EAKYCKPSKG (78 aa)).

Forms a co-chaperone complex with MCM2 and histone H3.3-H4 dimers. Within the complex, interacts (via C-terminus) with MCM2 (via N-terminus); the interaction is histone-dependent. Within the complex, interacts (via C-terminus) with histone H3.3-H4 heterodimers; the interaction is direct. Interacts with histones H4, H3.3, H3.2 and H3.1, but not with CENPA or the testis-specific histone H3.1t. Interacts (via J domain) with HSPA1A, HSPA1B and HSPA8. May interact with TONSL; the interaction seems to be histone-dependent. May interact with HSPA8 and BAG2; the interactions seem to be histone-dependent.

It is found in the nucleus. The protein resides in the cytoplasm. It localises to the cell membrane. In terms of biological role, acts as a dual histone chaperone and heat shock co-chaperone. As a histone chaperone, forms a co-chaperone complex with MCM2 and histone H3-H4 heterodimers; and may thereby assist MCM2 in histone H3-H4 heterodimer recognition and facilitate the assembly of histones into nucleosomes. May also act as a histone co-chaperone together with TONSL. May recruit histone chaperones ASF1A, NASP and SPT2 to histone H3-H4 heterodimers. Also plays a role as co-chaperone of the HSP70 family of molecular chaperone proteins, such as HSPA1A, HSPA1B and HSPA8. As a co-chaperone, may play a role in the recruitment of HSP70-type molecular chaperone machinery to histone H3-H4 substrates, thereby maintaining the histone structural integrity. Exhibits activity to assemble histones onto DNA in vitro. This is DnaJ homolog subfamily C member 9 (Dnajc9) from Mus musculus (Mouse).